Reading from the N-terminus, the 481-residue chain is Serralysin B (481 aa).

The propeptide occupies 1 to 15 (MQQNEKASLNTSAAA). Residue His-189 participates in Zn(2+) binding. Glu-190 is a catalytic residue. Zn(2+) is bound by residues His-193 and Tyr-230. Ca(2+) contacts are provided by Arg-267, Gly-269, Thr-271, Asp-299, Gly-301, Gly-302, Asp-304, Thr-341, Glu-343, Gly-348, Gly-350, Asp-352, Asn-357, Ala-359, Asn-361, Gly-365, Gly-366, Ala-367, Gly-368, Asp-370, Gly-374, Gly-377, Asp-379, Gly-383, Gly-384, Ala-385, Gly-386, Asp-388, Asp-397, Asp-404, and Asp-414. Hemolysin-type calcium-binding repeat units lie at residues 346–363 (IGGS…DNIL), 364–381 (QGGA…ADTL), and 382–399 (TGGA…QDST).

The protein belongs to the peptidase M10B family. It depends on Ca(2+) as a cofactor. The cofactor is Zn(2+).

The protein resides in the secreted. The enzyme catalyses Preferential cleavage of bonds with hydrophobic residues in P1'.. The chain is Serralysin B (prtB) from Dickeya chrysanthemi (Pectobacterium chrysanthemi).